An 817-amino-acid chain; its full sequence is Two pore calcium channel protein 1 (817 aa).

The Cytoplasmic segment spans residues 1-101 (MSVILDDDVL…PKDARALAAY (101 aa)). A disordered region spans residues 22 to 66 (PLTPSNGLGQEDLPSKNGGGQSGPNSQVPSLVSGADSPPSSPPGH). The chain crosses the membrane as a helical span at residues 102-122 (LFVHNHFFYMMELLTALLLLL). Residues 123-137 (LSLCESPAVPALKLR) lie on the Extracellular side of the membrane. A helical membrane pass occupies residues 138–158 (TYVHATLELFALMVVVFELCM). The Cytoplasmic segment spans residues 159–172 (KLRWLGFHTFVRHK). A helical transmembrane segment spans residues 173-193 (RTMVKTSVLVVQFIEAIVVLV). Residues 194–202 (RQTSHVRVT) lie on the Extracellular side of the membrane. Residues 203-221 (RALRCIFLVDCRYCGGVRR) form a helical membrane-spanning segment. Topologically, residues 222–235 (NLRQIFQSLPPFMD) are cytoplasmic. The chain crosses the membrane as a helical span at residues 236-256 (ILLLLLFFMIIFAILGFYLFS). Residues 257–263 (TNPSDPY) are Extracellular-facing. An intramembrane region (helical; Pore-forming) is located at residues 264 to 287 (FNTLENSIVNLFVLLTTANFPDVM). Residues 288–298 (MPSYSRNPWSC) are Extracellular-facing. A helical transmembrane segment spans residues 299–319 (VFFIVYLSIELYFIMNLLLAV). Over 320 to 445 (VFDTFNDIEK…NILVNSKAFQ (126 aa)) the chain is Cytoplasmic. A helical membrane pass occupies residues 446–466 (YFMYLVVAVNGVWILVETFML). At 467-480 (KGGNFISKHVPWSY) the chain is on the extracellular side. Residues 481–501 (LVFLTIYGVELFMKVAGLGPV) traverse the membrane as a helical segment. At 502–504 (EYL) the chain is on the cytoplasmic side. Residues 505–527 (SSGWNLFDFSVTAFAFLGLLALT) form a helical membrane-spanning segment. The Extracellular portion of the chain corresponds to 528-535 (LNMEPFYF). A helical membrane pass occupies residues 536–550 (IVVLRPLQLLRLFKL). Residues 551–574 (KKRYRNVLDTMFELLPRMASLGLT) lie on the Cytoplasmic side of the membrane. Residues 575–595 (LLTFYYSFAIVGMEFFSGRLS) traverse the membrane as a helical segment. Topologically, residues 596–630 (PNCCNSSTVADAYRFINHTVGNKTKVEEGYYYLNN) are extracellular. Residues 631-654 (FDNILNSFVTLFELTVVNNWYIIM) constitute an intramembrane region (helical; Pore-forming). Residues 655-671 (EGVTSQTSHWSRLYFMT) are Extracellular-facing. A helical membrane pass occupies residues 672–692 (FYIVTMVVMTIIVAFILEAFV). At 693–817 (FRMNYSRKSQ…GSRQRSQTVT (125 aa)) the chain is on the cytoplasmic side. Positions 770-794 (SLKMYQEEIQEWYEEHAREQEQQQL) form a coiled coil. Residues 785–817 (HAREQEQQQLRGSAPSPAAQQTPGSRQRSQTVT) form a disordered region. The segment covering 802 to 817 (AAQQTPGSRQRSQTVT) has biased composition (polar residues).

Belongs to the calcium channel alpha-1 subunit (TC 1.A.1.11) family. Two pore calcium channel subfamily. As to quaternary structure, dimer. Interacts with MTOR; the interaction is required for TPCN1 ATP sensitivity. Interacts with STX7, STX8 and STX12. Interacts with JPT2. Found in a complex with LSM12, TPCN1 and TPCN2. N-glycosylated. In terms of tissue distribution, widely expressed. Expressed at relatively high level in kidney, liver and lung, and in the kidney it is expressed at inner medullary collecting ducts.

It is found in the lysosome membrane. Its subcellular location is the endosome membrane. The protein localises to the early endosome membrane. It localises to the recycling endosome membrane. It carries out the reaction Na(+)(in) = Na(+)(out). It catalyses the reaction Ca(2+)(in) = Ca(2+)(out). Its activity is regulated as follows. Na(+) current is inhibited by ATP in a MTORC-dependent manner. ATP sensitivity is independent of PI(3,5)P2. Probably regulated by Mg(2+) ions, cytosolic Mg(2+) selectively inhibits outward current while lysosomal Mg(2+) modestly inhibits both the outward and inward currents. In the absence of Mg(2+), NAADP readily activates TPCN2, with properties similar to PI(3,5)P2. Both current elicited by PI(3,5)P2 as well as NAADP are inhibited by tetrandrine. Its function is as follows. Intracellular channel initially characterized as a non-selective Ca(2+)-permeable channel activated by NAADP (nicotinic acid adenine dinucleotide phosphate), it is also a voltage-gated highly-selective Na(+) channel activated directly by PI(3,5)P2 (phosphatidylinositol 3,5-bisphosphate) that senses pH changes and confers electrical excitability to organelles. Localizes to the early and recycling endosomes membranes where it plays a role in the uptake and processing of proteins and regulates organellar membrane excitability, membrane trafficking and pH homeostasis. Ion selectivity is not fixed but rather agonist-dependent and under defined ionic conditions, can be readily activated by both NAADP and PI(3,5)P2. Required for mTOR-dependent nutrient sensing. In Rattus norvegicus (Rat), this protein is Two pore calcium channel protein 1 (Tpcn1).